The sequence spans 387 residues: Growth-regulating factor 3 (387 aa).

One can recognise a QLQ domain in the interval Pro53–Arg88. Short sequence motifs (bipartite nuclear localization signal) lie at residues Lys111–Arg129 and Arg147–Lys154. A WRC domain is found at Asp114–Ala158. The segment at Met145–Val176 is disordered.

It belongs to the GRF family.

It is found in the nucleus. Transcription activator that plays a regulatory role in gibberellin-induced stem elongation. The protein is Growth-regulating factor 3 (GRF3) of Oryza sativa subsp. japonica (Rice).